We begin with the raw amino-acid sequence, 689 residues long: DNA ligase (689 aa).

NAD(+) contacts are provided by residues 32 to 36 (DAEYD), 81 to 82 (SL), and Glu113. Lys115 (N6-AMP-lysine intermediate) is an active-site residue. Arg136, Glu176, Lys306, and Lys330 together coordinate NAD(+). Zn(2+) is bound by residues Cys424, Cys427, Cys442, and Cys448. The region spanning 606-689 (AEELPLAEQI…ALLAEHGITI (84 aa)) is the BRCT domain.

The protein belongs to the NAD-dependent DNA ligase family. LigA subfamily. The cofactor is Mg(2+). Mn(2+) is required as a cofactor.

It carries out the reaction NAD(+) + (deoxyribonucleotide)n-3'-hydroxyl + 5'-phospho-(deoxyribonucleotide)m = (deoxyribonucleotide)n+m + AMP + beta-nicotinamide D-nucleotide.. Functionally, DNA ligase that catalyzes the formation of phosphodiester linkages between 5'-phosphoryl and 3'-hydroxyl groups in double-stranded DNA using NAD as a coenzyme and as the energy source for the reaction. It is essential for DNA replication and repair of damaged DNA. This chain is DNA ligase, found in Colwellia psychrerythraea (strain 34H / ATCC BAA-681) (Vibrio psychroerythus).